A 230-amino-acid polypeptide reads, in one-letter code: Ribose-5-phosphate isomerase A (230 aa).

Substrate-binding positions include 29–32 (TGST), 85–88 (DGAD), and 98–101 (KGGG). The active-site Proton acceptor is Glu107. Lys125 lines the substrate pocket.

This sequence belongs to the ribose 5-phosphate isomerase family. Homodimer.

It carries out the reaction aldehydo-D-ribose 5-phosphate = D-ribulose 5-phosphate. Its pathway is carbohydrate degradation; pentose phosphate pathway; D-ribose 5-phosphate from D-ribulose 5-phosphate (non-oxidative stage): step 1/1. Functionally, catalyzes the reversible conversion of ribose-5-phosphate to ribulose 5-phosphate. This Staphylococcus haemolyticus (strain JCSC1435) protein is Ribose-5-phosphate isomerase A.